The following is a 167-amino-acid chain: Ureidoglycolate lyase (167 aa).

Belongs to the ureidoglycolate lyase family. As to quaternary structure, homodimer. The cofactor is Ni(2+).

It catalyses the reaction (S)-ureidoglycolate = urea + glyoxylate. The protein operates within nitrogen metabolism; (S)-allantoin degradation. Functionally, catalyzes the catabolism of the allantoin degradation intermediate (S)-ureidoglycolate, generating urea and glyoxylate. Involved in the utilization of allantoin as nitrogen source. The sequence is that of Ureidoglycolate lyase from Pseudomonas putida (strain ATCC 700007 / DSM 6899 / JCM 31910 / BCRC 17059 / LMG 24140 / F1).